We begin with the raw amino-acid sequence, 487 residues long: Betaine aldehyde dehydrogenase (487 aa).

Residues serine 26 and aspartate 93 each coordinate K(+). Residue 150 to 152 participates in NAD(+) binding; sequence GAW. The Charge relay system role is filled by lysine 162. NAD(+)-binding positions include 176-179 and 229-232; these read KPSE and SVPT. Leucine 244 contacts K(+). Glutamate 250 acts as the Proton acceptor in catalysis. Residues glycine 252, cysteine 284, and glutamate 384 each coordinate NAD(+). The active-site Nucleophile is the cysteine 284. A Cysteine sulfenic acid (-SOH) modification is found at cysteine 284. The K(+) site is built by lysine 454 and glycine 457. Glutamate 461 functions as the Charge relay system in the catalytic mechanism.

It belongs to the aldehyde dehydrogenase family. As to quaternary structure, dimer of dimers. It depends on K(+) as a cofactor.

It carries out the reaction betaine aldehyde + NAD(+) + H2O = glycine betaine + NADH + 2 H(+). The protein operates within amine and polyamine biosynthesis; betaine biosynthesis via choline pathway; betaine from betaine aldehyde: step 1/1. Its function is as follows. Involved in the biosynthesis of the osmoprotectant glycine betaine. Catalyzes the irreversible oxidation of betaine aldehyde to the corresponding acid. The sequence is that of Betaine aldehyde dehydrogenase from Rhizobium etli (strain CIAT 652).